A 421-amino-acid polypeptide reads, in one-letter code: uncharacterized protein (421 aa).

Coiled-coil stretches lie at residues 126 to 182 (YART…IQKI) and 328 to 397 (YQVE…RLTL).

This is an uncharacterized protein from Treponema pallidum (strain Nichols).